The chain runs to 89 residues: Small ribosomal subunit protein uS15 (89 aa).

It belongs to the universal ribosomal protein uS15 family. Part of the 30S ribosomal subunit. Forms a bridge to the 50S subunit in the 70S ribosome, contacting the 23S rRNA.

One of the primary rRNA binding proteins, it binds directly to 16S rRNA where it helps nucleate assembly of the platform of the 30S subunit by binding and bridging several RNA helices of the 16S rRNA. Its function is as follows. Forms an intersubunit bridge (bridge B4) with the 23S rRNA of the 50S subunit in the ribosome. The sequence is that of Small ribosomal subunit protein uS15 from Methylobacterium nodulans (strain LMG 21967 / CNCM I-2342 / ORS 2060).